A 215-amino-acid chain; its full sequence is Cytochrome b6 (215 aa).

The helical transmembrane segment at 32–52 (IFYCLGGITLTCFLVQVATGF) threads the bilayer. Position 35 (Cys-35) interacts with heme c. 2 residues coordinate heme b: His-86 and His-100. The next 3 helical transmembrane spans lie at 90–110 (ASMMVLMMILHVFRVYLTGGF), 116–136 (LTWVTGVILAVLTVSFGVTGY), and 186–206 (LHTFILPLLTAVFMPMHFLMI). Positions 187 and 202 each coordinate heme b.

This sequence belongs to the cytochrome b family. PetB subfamily. As to quaternary structure, the 4 large subunits of the cytochrome b6-f complex are cytochrome b6, subunit IV (17 kDa polypeptide, PetD), cytochrome f and the Rieske protein, while the 4 small subunits are PetG, PetL, PetM and PetN. The complex functions as a dimer. Heme b serves as cofactor. Requires heme c as cofactor.

It localises to the plastid. The protein resides in the chloroplast thylakoid membrane. Component of the cytochrome b6-f complex, which mediates electron transfer between photosystem II (PSII) and photosystem I (PSI), cyclic electron flow around PSI, and state transitions. The polypeptide is Cytochrome b6 (Pinus thunbergii (Japanese black pine)).